The primary structure comprises 245 residues: Glutathione S-transferase F4 (245 aa).

Positions A25 to G106 constitute a GST N-terminal domain. Residues S35 to T36, H64 to K65, Q77 to V78, and E90 to S91 contribute to the glutathione site. One can recognise a GST C-terminal domain in the interval S114 to R244.

The protein belongs to the GST superfamily. Phi family.

It is found in the cytoplasm. The protein resides in the cytosol. It catalyses the reaction RX + glutathione = an S-substituted glutathione + a halide anion + H(+). In terms of biological role, may be involved in the conjugation of reduced glutathione to a wide number of exogenous and endogenous hydrophobic electrophiles and have a detoxification role against certain herbicides. The chain is Glutathione S-transferase F4 (GSTF4) from Arabidopsis thaliana (Mouse-ear cress).